A 546-amino-acid chain; its full sequence is Glutamate--tRNA ligase (546 aa).

The short motif at 41–51 (PSPTGFQHIGG) is the 'HIGH' region element. The 'KMSKS' region signature appears at 293–297 (KLSKR). An ATP-binding site is contributed by Lys-296.

Belongs to the class-I aminoacyl-tRNA synthetase family. Glutamate--tRNA ligase type 1 subfamily. As to quaternary structure, monomer.

It localises to the cytoplasm. It catalyses the reaction tRNA(Glu) + L-glutamate + ATP = L-glutamyl-tRNA(Glu) + AMP + diphosphate. Catalyzes the attachment of glutamate to tRNA(Glu) in a two-step reaction: glutamate is first activated by ATP to form Glu-AMP and then transferred to the acceptor end of tRNA(Glu). The chain is Glutamate--tRNA ligase from Clostridium perfringens (strain 13 / Type A).